A 188-amino-acid polypeptide reads, in one-letter code: dCTP deaminase (188 aa).

DCTP is bound by residues 111-116, 135-137, glutamine 156, tyrosine 170, and glutamine 180; these read KSTYAR and TLE. Glutamate 137 functions as the Proton donor/acceptor in the catalytic mechanism.

This sequence belongs to the dCTP deaminase family. In terms of assembly, homotrimer.

It catalyses the reaction dCTP + H2O + H(+) = dUTP + NH4(+). The protein operates within pyrimidine metabolism; dUMP biosynthesis; dUMP from dCTP (dUTP route): step 1/2. Catalyzes the deamination of dCTP to dUTP. The protein is dCTP deaminase of Pseudomonas fluorescens (strain Pf0-1).